The primary structure comprises 295 residues: 4-diphosphocytidyl-2-C-methyl-D-erythritol kinase (295 aa).

Residue Lys-10 is part of the active site. 97 to 107 (PIGSGLGGASS) lines the ATP pocket. Asp-139 is an active-site residue.

It belongs to the GHMP kinase family. IspE subfamily. Homodimer.

It carries out the reaction 4-CDP-2-C-methyl-D-erythritol + ATP = 4-CDP-2-C-methyl-D-erythritol 2-phosphate + ADP + H(+). It functions in the pathway isoprenoid biosynthesis; isopentenyl diphosphate biosynthesis via DXP pathway; isopentenyl diphosphate from 1-deoxy-D-xylulose 5-phosphate: step 3/6. Its function is as follows. Catalyzes the phosphorylation of the position 2 hydroxy group of 4-diphosphocytidyl-2C-methyl-D-erythritol. The sequence is that of 4-diphosphocytidyl-2-C-methyl-D-erythritol kinase from Blochmanniella pennsylvanica (strain BPEN).